We begin with the raw amino-acid sequence, 690 residues long: Ectopic P granules protein 2 (690 aa).

Coiled coils occupy residues 20–181 (IELA…EREV), 359–409 (ELLR…TIQE), 458–494 (LESGKKKHANEILTVRNELEQSNAAHQSLRDQCSLLL), and 560–643 (ATIE…ETKR). The LIR 1 signature appears at 61 to 64 (YSTL). The tract at residues 381–385 (DFKIL) is required for interaction with lgg-1. Residues 666–690 (EELDEEPKASTESEEKAEWEMVDEE) are disordered. Residues 671–684 (EPKASTESEEKAEW) show a composition bias toward basic and acidic residues. Residues 684-687 (WEMV) carry the LIR 2 motif.

As to quaternary structure, interacts with sepa-1. Interacts (via the LIR motifs) with lgg-1 and lgg-2. Shows strong interaction with lgg-1 and weak interaction with lgg-2.

It is found in the cytoplasm. In terms of biological role, involved in autophagy. Thought to act as an adapter protein that brings PGL granules to autophagic structures containing lgg-1. Association with other adapters such as sepa-1 is required for the accumulation and degradation of germ cell specific P-granules by autophagy in somatic cells. This ensures exclusive localization of the P-granules in germ cells. May also play a role in the removal of sepa-1 from somatic cells. This chain is Ectopic P granules protein 2, found in Caenorhabditis elegans.